Reading from the N-terminus, the 670-residue chain is G-protein coupled receptor moody (670 aa).

Residues 1 to 40 are Extracellular-facing; that stretch reads MSDETTISLEDGYPPLEALTTMVPPADATGFSQSLLTFAA. The chain crosses the membrane as a helical span at residues 41–61; that stretch reads VMTFLIMIVGICGNLLTVVAL. At 62-69 the chain is on the cytoplasmic side; it reads LKCPKVRN. The helical transmembrane segment at 70-90 threads the bilayer; sequence VAAAFIISLCIADLLFCALVL. The Extracellular segment spans residues 91-111; that stretch reads PFQGLRFVQGTWRHGQVLCRL. A disulfide bridge links cysteine 109 with cysteine 188. The chain crosses the membrane as a helical span at residues 112 to 132; it reads IPFIQYGNIGVSLLCIAMITI. The Cytoplasmic segment spans residues 133-152; sequence NRYVMITHHGLYARIYKRHW. The helical transmembrane segment at 153-173 threads the bilayer; the sequence is IAVMIAACWLFSYGMQLPTLL. At 174-202 the chain is on the extracellular side; that stretch reads GEWGRFGYDSRLQTCSIMTDDHGHSSKTT. A helical transmembrane segment spans residues 203-223; that stretch reads LFITAFVIPCLVIIACYAKIF. Residues 224–313 are Cytoplasmic-facing; the sequence is WVVHKSEQRL…AKRNEWRITK (90 aa). The tract at residues 258 to 302 is disordered; that stretch reads LPSGAECQPSNRVSSDSSSSFSIDVPETAPSGKQQPTRVKDQREV. The segment covering 267-279 has biased composition (low complexity); that stretch reads SNRVSSDSSSSFS. A helical transmembrane segment spans residues 314 to 334; that stretch reads MVLAIFLSFVVCYLPITIVKV. The Extracellular portion of the chain corresponds to 335 to 345; that stretch reads ADKNVEHPSLH. The helical transmembrane segment at 346–366 threads the bilayer; that stretch reads ICSYILLYLSACINPIIYVIM. Topologically, residues 367–670 are cytoplasmic; that stretch reads NKQYRKAYKT…LTAKMKFPKD (304 aa). 3 disordered regions span residues 461–490, 562–622, and 636–670; these read DLISKSNLPQPNVTPPPPSVLTATPNGSNS, ELPP…YMNV, and TNAVAPESDSGPANTSATVSISGSKLTAKMKFPKD. Positions 564-584 are enriched in pro residues; that stretch reads PPTPPATSAPTTPAPPPPSSP. Low complexity predominate over residues 585–598; the sequence is LHPLSTDSSTTTIS. Polar residues predominate over residues 646-660; that stretch reads GPANTSATVSISGSK.

Belongs to the G-protein coupled receptor 1 family. Isoform A and isoform B are expressed in the head. Isoform B only is expressed in the body. Expressed in embryonic glial cells that are involved in ensheathment and insulation of the nervous system. Both isoforms are expressed in glia that insulate the larval and adult nervous system. Also expressed in the germ cells, the gut, and the heart.

The protein resides in the cell membrane. Functionally, isoform A and isoform B are required in glia to regulate the acute sensitivity to cocaine and to continuously maintain the proper blood-brain barrier (BBB) function. A moody-mediated signaling pathway functions in glia to regulate nervous system insulation and drug-related behaviors. Galphai and Galphao, and the regulator of G protein signaling, loco, are required in the surface glia to achieve effective insulation. The components function by regulating the cortical actin and thereby stabilizing the extended morphology of the surface glia, which in turn is necessary for the formation of septate junctions of sufficient length to achieve proper sealing of the nerve cord. In Drosophila melanogaster (Fruit fly), this protein is G-protein coupled receptor moody.